The primary structure comprises 427 residues: tRNA(Ile)-lysidine synthase (427 aa).

29–34 (SGGVDS) contacts ATP.

This sequence belongs to the tRNA(Ile)-lysidine synthase family.

The protein localises to the cytoplasm. It carries out the reaction cytidine(34) in tRNA(Ile2) + L-lysine + ATP = lysidine(34) in tRNA(Ile2) + AMP + diphosphate + H(+). Functionally, ligates lysine onto the cytidine present at position 34 of the AUA codon-specific tRNA(Ile) that contains the anticodon CAU, in an ATP-dependent manner. Cytidine is converted to lysidine, thus changing the amino acid specificity of the tRNA from methionine to isoleucine. This chain is tRNA(Ile)-lysidine synthase, found in Thermosipho africanus (strain TCF52B).